The primary structure comprises 364 residues: Formimidoylglutamase (364 aa).

Mn(2+) is bound by residues His133, Asp189, His191, Asp193, Asp286, and Asp288.

This sequence belongs to the arginase family. Requires Mn(2+) as cofactor.

The catalysed reaction is N-formimidoyl-L-glutamate + H2O = formamide + L-glutamate. The protein operates within amino-acid degradation; L-histidine degradation into L-glutamate; L-glutamate from N-formimidoyl-L-glutamate (hydrolase route): step 1/1. Functionally, catalyzes the conversion of N-formimidoyl-L-glutamate to L-glutamate and formamide. This is Formimidoylglutamase from Photobacterium profundum (strain SS9).